Reading from the N-terminus, the 147-residue chain is Cytochrome b-c1 complex subunit 6, mitochondrial (147 aa).

The segment at 25 to 89 (AEDDDNEQHE…DLREHFKNTE (65 aa)) is disordered. Residues 41 to 78 (EEKEEENGDEDEDEDEDEDDDDDDDEDEEEEEEVTDQL) are compositionally biased toward acidic residues. Residues 79 to 89 (EDLREHFKNTE) show a composition bias toward basic and acidic residues. The cysteines at positions 101 and 123 are disulfide-linked.

Belongs to the UQCRH/QCR6 family. Component of the ubiquinol-cytochrome c oxidoreductase (cytochrome b-c1 complex, complex III, CIII), a multisubunit enzyme composed of 10 subunits. The complex is composed of 3 respiratory subunits cytochrome b (COB), cytochrome c1 (CYT1) and Rieske protein (RIP1), 2 core protein subunits COR1 and QCR2, and 5 low-molecular weight protein subunits QCR6, QCR7, QCR8, QCR9 and QCR10. The complex exists as an obligatory dimer and forms supercomplexes (SCs) in the inner mitochondrial membrane with a monomer or a dimer of cytochrome c oxidase (complex IV, CIV), resulting in 2 different assemblies (supercomplexes III(2)IV and III(2)IV(2)). QCR6 interacts with COX5A at the CIII-CIV interface.

Its subcellular location is the mitochondrion inner membrane. Its function is as follows. Component of the ubiquinol-cytochrome c oxidoreductase, a multisubunit transmembrane complex that is part of the mitochondrial electron transport chain which drives oxidative phosphorylation. The respiratory chain contains 3 multisubunit complexes succinate dehydrogenase (complex II, CII), ubiquinol-cytochrome c oxidoreductase (cytochrome b-c1 complex, complex III, CIII) and cytochrome c oxidase (complex IV, CIV), that cooperate to transfer electrons derived from NADH and succinate to molecular oxygen, creating an electrochemical gradient over the inner membrane that drives transmembrane transport and the ATP synthase. The cytochrome b-c1 complex catalyzes electron transfer from ubiquinol to cytochrome c, linking this redox reaction to translocation of protons across the mitochondrial inner membrane, with protons being carried across the membrane as hydrogens on the quinol. In the process called Q cycle, 2 protons are consumed from the matrix, 4 protons are released into the intermembrane space and 2 electrons are passed to cytochrome c. The protein is Cytochrome b-c1 complex subunit 6, mitochondrial (QCR6) of Saccharomyces cerevisiae (strain ATCC 204508 / S288c) (Baker's yeast).